We begin with the raw amino-acid sequence, 929 residues long: Protocadherin gamma-B7 (929 aa).

The N-terminal stretch at 1–30 (MGGSCAQRRRAGPRQVLFPLLLPLFYPTLC) is a signal peptide. Cadherin domains lie at 31–133 (EPIR…APQF), 134–242 (RKDE…PPVF), 243–347 (SQDV…SPEI), 348–452 (IITS…APVF), 453–562 (GQSA…APRV), and 570–675 (DGSA…LPDF). At 31–691 (EPIRYSIPEE…SDSQAEMQFY (661 aa)) the chain is on the extracellular side. N-linked (GlcNAc...) asparagine glycans are attached at residues Asn-419 and Asn-545. Residues 692–712 (LVVALALISVLFLLAVILAIA) form a helical membrane-spanning segment. Topologically, residues 713–929 (LRLRQSFSPT…KKKSGKKEKK (217 aa)) are cytoplasmic. 2 disordered regions span residues 806-838 (QAPPNTDWRFSQAQRPGTSGSQNGDDTGTWPNN) and 899-929 (ATLTNAAGKRDGKAPAGGNGNKKKSGKKEKK). A compositionally biased stretch (polar residues) spans 807–838 (APPNTDWRFSQAQRPGTSGSQNGDDTGTWPNN). Basic residues predominate over residues 919-929 (NKKKSGKKEKK).

Its subcellular location is the cell membrane. Functionally, potential calcium-dependent cell-adhesion protein. May be involved in the establishment and maintenance of specific neuronal connections in the brain. The sequence is that of Protocadherin gamma-B7 (PCDHGB7) from Homo sapiens (Human).